Here is a 470-residue protein sequence, read N- to C-terminus: Argininosuccinate lyase (470 aa).

Belongs to the lyase 1 family. Argininosuccinate lyase subfamily.

It localises to the cytoplasm. The catalysed reaction is 2-(N(omega)-L-arginino)succinate = fumarate + L-arginine. Its pathway is amino-acid biosynthesis; L-arginine biosynthesis; L-arginine from L-ornithine and carbamoyl phosphate: step 3/3. The polypeptide is Argininosuccinate lyase (Mycobacterium tuberculosis (strain CDC 1551 / Oshkosh)).